The chain runs to 1355 residues: Phospholipid-transporting ATPase DRS2 (1355 aa).

Positions 1–15 (MNDDRETPPKRKPGE) are enriched in basic and acidic residues. Positions 1–50 (MNDDRETPPKRKPGEDDTLFDIDFLDDTTSHSGSRSKVTNSHANANYIPP) are disordered. An involved in autoinhibition region spans residues 1-104 (MNDDRETPPK…SDAYQPQSLR (104 aa)). Over 1–221 (MNDDRETPPK…TFLPKFLFQE (221 aa)) the chain is Cytoplasmic. A compositionally biased stretch (acidic residues) spans 16 to 26 (DDTLFDIDFLD). Polar residues predominate over residues 30 to 44 (SHSGSRSKVTNSHAN). At Ser-102 the chain carries Phosphoserine. A helical membrane pass occupies residues 222 to 242 (FSKYANLFFLCTSAIQQVPHV). Positions 237–238 (QQ) are involved in phosphatidylserine substrate recognition. Residues 243–246 (SPTN) are Lumenal-facing. The helical transmembrane segment at 247–267 (RYTTIGTLLVVLIVSAMKECI) threads the bilayer. Topologically, residues 268 to 449 (EDIKRANSDK…VEKIINRQII (182 aa)) are cytoplasmic. The helical transmembrane segment at 450–470 (ALFTVLIVLILISSIGNVIMS) threads the bilayer. The Lumenal segment spans residues 471–490 (TADAKHLSYLYLEGTNKAGL). The chain crosses the membrane as a helical span at residues 491–511 (FFKDFLTFWILFSNLVPISLF). Residues 512–1012 (VTVELIKYYQ…WSYQRISVAI (501 aa)) lie on the Cytoplasmic side of the membrane. Asp-560 acts as the 4-aspartylphosphate intermediate in catalysis. 15 residues coordinate ATP: Asp-560, Lys-561, Thr-562, Glu-655, Phe-698, Ser-700, Lys-703, Lys-721, Arg-755, Thr-756, Thr-835, Gly-836, Asp-837, Arg-928, and Lys-934. A Mg(2+)-binding site is contributed by Asp-560. A Mg(2+)-binding site is contributed by Thr-562. Asp-954 serves as a coordination point for Mg(2+). Residues Asn-957 and Asp-958 each contribute to the ATP site. Residue Asp-958 participates in Mg(2+) binding. Residues 1013-1033 (LYSFYKNTALYMTQFWYVFAN) form a helical membrane-spanning segment. The Lumenal portion of the chain corresponds to 1034 to 1043 (AFSGQSIMES). Residues 1044 to 1064 (WTMSFYNLFFTVWPPFVIGVF) traverse the membrane as a helical segment. Residues 1065–1094 (DQFVSSRLLERYPQLYKLGQKGQFFSVYIF) lie on the Cytoplasmic side of the membrane. Residues 1095-1115 (WGWIINGFFHSAIVFIGTILI) traverse the membrane as a helical segment. Over 1116–1131 (YRYGFALNMHGELADH) the chain is Lumenal. The helical transmembrane segment at 1132–1152 (WSWGVTVYTTSVIIVLGKAAL) threads the bilayer. Lys-1149 contributes to the a 1,2-diacyl-sn-glycero-3-phospho-(1D-myo-inositol 4-phosphate) binding site. Residues 1153 to 1161 (VTNQWTKFT) are Cytoplasmic-facing. The chain crosses the membrane as a helical span at residues 1162 to 1182 (LIAIPGSLLFWLIFFPIYASI). The Lumenal portion of the chain corresponds to 1183–1202 (FPHANISREYYGVVKHTYGS). A helical membrane pass occupies residues 1203–1223 (GVFWLTLIVLPIFALVRDFLW). A 1,2-diacyl-sn-glycero-3-phospho-(1D-myo-inositol 4-phosphate) contacts are provided by Arg-1219, Trp-1223, Lys-1224, Tyr-1235, and His-1236. The Cytoplasmic segment spans residues 1224–1355 (KYYKRMYEPE…SSRDDISFDI (132 aa)). The segment at 1230 to 1282 (YEPETYHVIQEMQKYNISDSRPHVQQFQNAIRKVRQVQRMKKQRGFAFSQAEE) is interaction with GEA2. The interval 1231 to 1309 (EPETYHVIQE…KYGELQDASA (79 aa)) is involved in autoinhibition. A disordered region spans residues 1305–1355 (QDASANPFNDNNGLGSNDFESAEPFIENPFADGNQNSNRFSSSRDDISFDI). Residues 1307–1323 (ASANPFNDNNGLGSNDF) are compositionally biased toward polar residues. Residues 1346-1355 (SSRDDISFDI) show a composition bias toward basic and acidic residues.

This sequence belongs to the cation transport ATPase (P-type) (TC 3.A.3) family. Type IV subfamily. As to quaternary structure, component of a flippase complex consisting of DRS2 and CDC50. Interacts with CDC50; the interaction is direct, is required for their mutual export from the endoplasmic reticulum, and preferentially occurs when DRS2 is in the E2P state. Interacts (via C-terminus) with GEA2 (via SEC7 domain); the interaction is direct. Interacts with GEA1. Mg(2+) is required as a cofactor.

It is found in the golgi apparatus. Its subcellular location is the trans-Golgi network membrane. The protein resides in the endosome membrane. It catalyses the reaction ATP + H2O + phospholipidSide 1 = ADP + phosphate + phospholipidSide 2.. The enzyme catalyses a 1,2-diacyl-sn-glycero-3-phospho-L-serine(out) + ATP + H2O = a 1,2-diacyl-sn-glycero-3-phospho-L-serine(in) + ADP + phosphate + H(+). It carries out the reaction a 1,2-diacyl-sn-glycero-3-phosphoethanolamine(out) + ATP + H2O = a 1,2-diacyl-sn-glycero-3-phosphoethanolamine(in) + ADP + phosphate + H(+). Allosterically activated by binding 1,2-diacyl-sn-glycero-3-phospho-(1D-myo-inositol 4-phosphate) (phosphatidylinositol 4-phosphate). Inhibited by orthovanadate, N-ethylmaleimide, trifluoroberyllate and tetrafluoroaluminate; orthovanadate and N-ethylmaleimide inhibit phosphorylation of the active site aspartic acid. The ATPase activity is not potently stimulated by phosphatidylinositol 3-phosphate and phosphatidylinositol 5-phosphate, phosphatidylinositol 4,5-bisphosphate or phosphatidylcholine. Not inhibited by azide. Its function is as follows. Catalytic component of a P4-ATPase flippase complex which catalyzes the hydrolysis of ATP coupled to the transport of phosphatidylserine and small amounts of ethanolamine from the lumen to the cytosolic leaflet of the trans-Golgi network and ensures the maintenance of asymmetric distribution of phospholipids. Contributes to clathrin-coated vesicle formation, endocytosis, and protein trafficking between the Golgi and endosomal system. Does not appear to transport phosphatidylcholine or sphingomyelin. In Saccharomyces cerevisiae (strain ATCC 204508 / S288c) (Baker's yeast), this protein is Phospholipid-transporting ATPase DRS2.